The primary structure comprises 1187 residues: Trafficking protein particle complex II-specific subunit 120 homolog (1187 aa).

The tract at residues 1037-1059 is disordered; the sequence is GTTAKTDSSKEPGDGSSRSADES.

Belongs to the TRS120 family. As to quaternary structure, part of the multisubunit TRAPP (transport protein particle) II complex composed of BET3, BET5, TRS20, TRS23, TRS31, TRS33, TRS65, TRS85, TRS120 and TRS130.

The protein localises to the golgi apparatus. Its subcellular location is the trans-Golgi network. The protein resides in the early endosome. Specific subunit of the TRAPP II complex, a highly conserved vesicle tethering complex that is required for the proper transport of proteins in post-Golgi trafficking pathways to the growing cell plate in mitotic active cells. The chain is Trafficking protein particle complex II-specific subunit 120 homolog from Oryza sativa subsp. japonica (Rice).